The primary structure comprises 398 residues: Argininosuccinate synthase (398 aa).

An ATP-binding site is contributed by 8–16 (AYSGGLDTS). Tyrosine 87 lines the L-citrulline pocket. Residue glycine 117 participates in ATP binding. Residues threonine 119, asparagine 123, and aspartate 124 each coordinate L-aspartate. Asparagine 123 is an L-citrulline binding site. Arginine 127, serine 175, glutamate 259, and tyrosine 271 together coordinate L-citrulline.

It belongs to the argininosuccinate synthase family. Type 1 subfamily. Homotetramer.

It localises to the cytoplasm. It carries out the reaction L-citrulline + L-aspartate + ATP = 2-(N(omega)-L-arginino)succinate + AMP + diphosphate + H(+). The protein operates within amino-acid biosynthesis; L-arginine biosynthesis; L-arginine from L-ornithine and carbamoyl phosphate: step 2/3. This is Argininosuccinate synthase from Corynebacterium kroppenstedtii (strain DSM 44385 / JCM 11950 / CIP 105744 / CCUG 35717).